We begin with the raw amino-acid sequence, 527 residues long: Catalase (527 aa).

Over residues Met-1–Gln-22 the composition is skewed to basic and acidic residues. The interval Met-1–Gly-32 is disordered. Ala-2 carries the post-translational modification N-acetylalanine. Position 9 is a phosphoserine (Ser-9). Lys-13 is subject to N6-succinyllysine. Catalysis depends on residues His-75 and Asn-148. Residues His-194, Ser-201, Arg-203, and Asn-213 each contribute to the NADP(+) site. At Lys-221 the chain carries N6-succinyllysine. Lys-233 carries the post-translational modification N6-acetyllysine. Residues Lys-237, Trp-303, and His-305 each coordinate NADP(+). Tyr-358 lines the heme pocket. Phosphoserine occurs at positions 417 and 434. Lys-480 carries the N6-acetyllysine; alternate modification. Lys-480 is modified (N6-succinyllysine; alternate). N6-acetyllysine is present on Lys-499. A Phosphothreonine modification is found at Thr-511. Ser-517 carries the post-translational modification Phosphoserine. The short motif at Lys-524–Leu-527 is the Microbody targeting signal; atypical element.

This sequence belongs to the catalase family. Homotetramer. Interacts (via microbody targeting signal) with PEX5, monomeric form interacts with PEX5, leading to its translocation into peroxisomes. Heme serves as cofactor. Requires NADP(+) as cofactor.

It is found in the peroxisome matrix. The enzyme catalyses 2 H2O2 = O2 + 2 H2O. Catalyzes the degradation of hydrogen peroxide (H(2)O(2)) generated by peroxisomal oxidases to water and oxygen, thereby protecting cells from the toxic effects of hydrogen peroxide. Promotes growth of cells including T-cells, B-cells, myeloid leukemia cells, melanoma cells, mastocytoma cells and normal and transformed fibroblast cells. The chain is Catalase (CAT) from Sus scrofa (Pig).